The primary structure comprises 68 residues: MWIESDAGVAIDRHARGACSLGEAGCATYCFYQGKHHGGCCGENYTKCLGTCYCNGSGYEYRCHSCDL.

Positions 1–16 (MWIESDAGVAIDRHAR) are cleaved as a signal peptide.

Post-translationally, contains 5 disulfide bonds. In terms of tissue distribution, expressed in hemolymph, gills, digestive gland, foot, adductor muscles and mantle.

Its subcellular location is the secreted. The protein localises to the target cell membrane. Functionally, shows antibacterial activity against numerous Gram-positive bacteria. It selectively inhibits peptidoglycan biosynthesis through complex formation with the cell wall precursor lipid II (1:1 molar ratio) thus inhibiting cell wall synthesis. This is Defensin gallicin from Mytilus galloprovincialis (Mediterranean mussel).